The chain runs to 72 residues: Translation initiation factor IF-1 1 (72 aa).

The 72-residue stretch at 1–72 folds into the S1-like domain; it reads MAKEDRIEMQ…SRARIIFRAK (72 aa).

It belongs to the IF-1 family. Component of the 30S ribosomal translation pre-initiation complex which assembles on the 30S ribosome in the order IF-2 and IF-3, IF-1 and N-formylmethionyl-tRNA(fMet); mRNA recruitment can occur at any time during PIC assembly.

Its subcellular location is the cytoplasm. Functionally, one of the essential components for the initiation of protein synthesis. Stabilizes the binding of IF-2 and IF-3 on the 30S subunit to which N-formylmethionyl-tRNA(fMet) subsequently binds. Helps modulate mRNA selection, yielding the 30S pre-initiation complex (PIC). Upon addition of the 50S ribosomal subunit IF-1, IF-2 and IF-3 are released leaving the mature 70S translation initiation complex. This Methylobacillus flagellatus (strain ATCC 51484 / DSM 6875 / VKM B-1610 / KT) protein is Translation initiation factor IF-1 1.